The chain runs to 245 residues: MSVHSKLYEGKAKILYTTDEPEVLLADFKDDATAFNAQKRGSIIGKGRINCSISSQLFQQLEASGIKTHFIDSPAPNQMRVKAVKIIPLEVVIRNIAAGSLSQQTGIELGTVLKQPLVEFYYKNDQLGDPLLTRDRLLLMELATAEQVEEITHLALQINDFLKNFWQNCGITLVDFKLEFGLDSQQQILLADEISPDTCRLWNTTEADPNRRVMDKDRFRRDLGNVEDAYQEVLQRVLTAVEIKN.

It belongs to the SAICAR synthetase family.

It catalyses the reaction 5-amino-1-(5-phospho-D-ribosyl)imidazole-4-carboxylate + L-aspartate + ATP = (2S)-2-[5-amino-1-(5-phospho-beta-D-ribosyl)imidazole-4-carboxamido]succinate + ADP + phosphate + 2 H(+). It functions in the pathway purine metabolism; IMP biosynthesis via de novo pathway; 5-amino-1-(5-phospho-D-ribosyl)imidazole-4-carboxamide from 5-amino-1-(5-phospho-D-ribosyl)imidazole-4-carboxylate: step 1/2. In Nostoc sp. (strain PCC 7120 / SAG 25.82 / UTEX 2576), this protein is Phosphoribosylaminoimidazole-succinocarboxamide synthase.